The sequence spans 517 residues: Putative transporter C543.05c (517 aa).

The next 11 membrane-spanning stretches (helical) occupy residues 68-88 (SFGV…FALL), 93-113 (LCIV…YDIM), 121-141 (FPFL…IAIA), 155-175 (CEIF…QVLC), 186-206 (FLSI…DTVG), 217-237 (ILLL…FQHI), 269-289 (IPVG…ILFY), 311-331 (GFHW…ILGI), 377-397 (SNFI…LLVL), 403-423 (CVLA…NGIT), and 449-471 (RVVW…ITQV).

This sequence belongs to the anion exchanger (TC 2.A.31) family.

It localises to the vacuole membrane. This Schizosaccharomyces pombe (strain 972 / ATCC 24843) (Fission yeast) protein is Putative transporter C543.05c.